Reading from the N-terminus, the 580-residue chain is Arginine--tRNA ligase (580 aa).

The 'HIGH' region signature appears at 123-133 (PNLAKEMHVGH).

The protein belongs to the class-I aminoacyl-tRNA synthetase family. As to quaternary structure, monomer.

The protein localises to the cytoplasm. The enzyme catalyses tRNA(Arg) + L-arginine + ATP = L-arginyl-tRNA(Arg) + AMP + diphosphate. The protein is Arginine--tRNA ligase of Pseudoalteromonas translucida (strain TAC 125).